The following is a 257-amino-acid chain: Sad1-interacting factor 1 (257 aa).

Positions 16–68 are disordered; it reads LNKIKQGGASRINQILGQNSDDSQSDVRATASEEAVHSETATPVTPMSSGFME. Polar residues-rich tracts occupy residues 26–37 and 54–63; these read RINQILGQNSDD and ETATPVTPMS. Position 35 is a phosphoserine (serine 35). Position 132 is a phosphoserine (serine 132). Threonine 134 is modified (phosphothreonine). A run of 2 helical transmembrane segments spans residues 160-180 and 231-251; these read LLAI…LLPW and FTQL…CCYF.

Interacts with kms1 and sad1.

Its subcellular location is the membrane. This is Sad1-interacting factor 1 (sif1) from Schizosaccharomyces pombe (strain 972 / ATCC 24843) (Fission yeast).